Consider the following 318-residue polypeptide: CRISPR-associated endonuclease Cas1 1 (318 aa).

Mn(2+) is bound by residues Glu-157, His-222, and Glu-237.

Belongs to the CRISPR-associated endonuclease Cas1 family. In terms of assembly, homodimer, forms a heterotetramer with a Cas2 homodimer. The cofactor is Mg(2+). Requires Mn(2+) as cofactor.

Functionally, CRISPR (clustered regularly interspaced short palindromic repeat), is an adaptive immune system that provides protection against mobile genetic elements (viruses, transposable elements and conjugative plasmids). CRISPR clusters contain spacers, sequences complementary to antecedent mobile elements, and target invading nucleic acids. CRISPR clusters are transcribed and processed into CRISPR RNA (crRNA). Acts as a dsDNA endonuclease. Involved in the integration of spacer DNA into the CRISPR cassette. This Francisella tularensis subsp. novicida (strain U112) protein is CRISPR-associated endonuclease Cas1 1.